The following is a 67-amino-acid chain: Putative sodium channel alpha-toxin Acra5 (67 aa).

An LCN-type CS-alpha/beta domain is found at Arg-2–Arg-65. 4 disulfide bridges follow: Cys-13-Cys-64, Cys-17-Cys-40, Cys-26-Cys-45, and Cys-30-Cys-47. Arg-67 is a propeptide (removed by a carboxypeptidase).

This sequence belongs to the long (4 C-C) scorpion toxin superfamily. Sodium channel inhibitor family. Alpha subfamily. As to expression, expressed by the venom gland.

Its subcellular location is the secreted. In terms of biological role, alpha toxins bind voltage-independently at site-3 of sodium channels (Nav) and inhibit the inactivation of the activated channels, thereby blocking neuronal transmission. The protein is Putative sodium channel alpha-toxin Acra5 of Androctonus crassicauda (Arabian fat-tailed scorpion).